A 481-amino-acid chain; its full sequence is Glutamate--tRNA ligase (481 aa).

The 'HIGH' region signature appears at P11–N21. Residues K255 to R259 carry the 'KMSKS' region motif. Residue K258 coordinates ATP.

The protein belongs to the class-I aminoacyl-tRNA synthetase family. Glutamate--tRNA ligase type 1 subfamily. In terms of assembly, monomer.

The protein localises to the cytoplasm. It carries out the reaction tRNA(Glu) + L-glutamate + ATP = L-glutamyl-tRNA(Glu) + AMP + diphosphate. Functionally, catalyzes the attachment of glutamate to tRNA(Glu) in a two-step reaction: glutamate is first activated by ATP to form Glu-AMP and then transferred to the acceptor end of tRNA(Glu). The sequence is that of Glutamate--tRNA ligase from Streptococcus pyogenes serotype M3 (strain ATCC BAA-595 / MGAS315).